We begin with the raw amino-acid sequence, 259 residues long: Ribosome maturation factor RimP (259 aa).

Residues 198–259 form a disordered region; sequence SLGLAPEPPP…RGEIDTSEGD (62 aa). Residues 243–253 show a composition bias toward basic and acidic residues; it reads LAADKARRGEI.

This sequence belongs to the RimP family.

Its subcellular location is the cytoplasm. Its function is as follows. Required for maturation of 30S ribosomal subunits. The protein is Ribosome maturation factor RimP of Rhodopseudomonas palustris (strain TIE-1).